The sequence spans 473 residues: Gamma-aminobutyric acid receptor subunit beta-3 (473 aa).

The signal sequence occupies residues 1–25 (MWGFAGGRLFGIFSAPVLVAVVCCA). Residues 26 to 246 (QSVNDPGNMS…FRLKRNIGYF (221 aa)) lie on the Extracellular side of the membrane. 2 N-linked (GlcNAc...) asparagine glycosylation sites follow: asparagine 33 and asparagine 105. Tyrosine 122 is a histamine binding site. A disulfide bridge links cysteine 161 with cysteine 175. Residue asparagine 174 is glycosylated (N-linked (GlcNAc...) asparagine). 4-aminobutanoate-binding residues include glutamate 180, tyrosine 182, and threonine 227. Histamine is bound by residues 181-182 (SY) and threonine 227. Residues 247 to 267 (ILQTYMPSILITILSWVSFWI) form a helical membrane-spanning segment. Residues 268 to 271 (NYDA) lie on the Cytoplasmic side of the membrane. A helical membrane pass occupies residues 272-292 (SAARVALGITTVLTMTTINTH). The Extracellular segment spans residues 293 to 304 (LRETLPKIPYVK). A helical membrane pass occupies residues 305–328 (AIDMYLMGCFVFVFLALLEYAFVN). The Cytoplasmic segment spans residues 329-447 (YIFFGRGPQR…KIPDLTDVNA (119 aa)). Residues 448–470 (IDRWSRIVFPFTFSLFNLVYWLY) traverse the membrane as a helical segment. Topologically, residues 471-473 (YVN) are extracellular.

This sequence belongs to the ligand-gated ion channel (TC 1.A.9) family. Gamma-aminobutyric acid receptor (TC 1.A.9.5) subfamily. GABRB3 sub-subfamily. As to quaternary structure, heteropentamer, formed by a combination of alpha (GABRA1-6), beta (GABRB1-3), gamma (GABRG1-3), delta (GABRD), epsilon (GABRE), rho (GABRR1-3), pi (GABRP) and theta (GABRQ) chains, each subunit exhibiting distinct physiological and pharmacological properties. Can form functional homopentamers (in vitro). Interacts with UBQLN1. May interact with KIF21B. Identified in a complex of 720 kDa composed of LHFPL4, NLGN2, GABRA1, GABRB2, GABRG2 and GABRB3. Interacts with LHFPL4. Interacts with GIT1; this interaction is required for synaptic GABRB3 surface stability and inhibitory synapse strength.

It localises to the postsynaptic cell membrane. The protein resides in the cell membrane. Its subcellular location is the cytoplasmic vesicle membrane. The enzyme catalyses chloride(in) = chloride(out). Potentiated by histamine. Beta subunit of the heteropentameric ligand-gated chloride channel gated by gamma-aminobutyric acid (GABA), a major inhibitory neurotransmitter in the brain. GABA-gated chloride channels, also named GABA(A) receptors (GABAAR), consist of five subunits arranged around a central pore and contain GABA active binding site(s) located at the alpha and beta subunit interface(s). GABAARs containing beta-3/GABRB3 subunit are found at both synaptic and extrasynaptic sites. When activated by GABA, GABAARs selectively allow the flow of chloride anions across the cell membrane down their electrochemical gradient. Chloride influx into the postsynaptic neuron following GABAAR opening decreases the neuron ability to generate a new action potential, thereby reducing nerve transmission. GABAARs containing alpha-1 and beta-3 subunits exhibit synaptogenic activity; the gamma-2 subunit being necessary but not sufficient to induce rapid synaptic contacts formation. Extrasynaptic beta-3 receptors contribute to the tonic GABAergic inhibition. GABAARs containing alpha-1, beta-3 and epsilon subunits may permit spontaneous chloride channel activity while preserving the structural information required for GABA-gated openings. Beta-containing GABAARs can simultaneously bind GABA and histamine where histamine binds at the interface of two neighboring beta subunits, which may be involved in the regulation of sleep and wakefulness. Plays an important role in somatosensation and in the production of antinociception. In Mus musculus (Mouse), this protein is Gamma-aminobutyric acid receptor subunit beta-3.